The primary structure comprises 238 residues: DNA damage-regulated autophagy modulator protein 1 (238 aa).

6 helical membrane-spanning segments follow: residues 9–29 (AFVPFLLVTWSSAAFIISYVV), 53–73 (SGIFGFMINFSAFLGAATMYT), 91–111 (VFNLVSLALGLVGCIGMGIVA), 116–136 (LAVPVVHDGGALLAFVCGVVY), 161–181 (MAISAVSCAAVVPMIACASLI), and 200–220 (VSAICEWTVAFGFIFYFLTFI).

It belongs to the DRAM/TMEM150 family.

It localises to the lysosome membrane. Functionally, lysosomal modulator of autophagy that plays a central role in p53/TP53-mediated apoptosis. Not involved in p73/TP73-mediated autophagy. In Mus musculus (Mouse), this protein is DNA damage-regulated autophagy modulator protein 1 (Dram1).